A 435-amino-acid chain; its full sequence is Eukaryotic translation initiation factor 3 subunit E (435 aa).

Residues 219-392 (FFNHPKGRDL…GHVVMGTQPL (174 aa)) form the PCI domain.

Belongs to the eIF-3 subunit E family. Component of the eukaryotic translation initiation factor 3 (eIF-3) complex. The eIF-3 complex interacts with pix. Interacts with mxt. In terms of tissue distribution, expression levels in females and males are relatively similar 10 days after oviposition, however by day 15 expression is higher in gravid females than in males (at protein level).

Its subcellular location is the cytoplasm. The protein localises to the microsome. It localises to the endoplasmic reticulum. Functionally, component of the eukaryotic translation initiation factor 3 (eIF-3) complex, which is involved in protein synthesis of a specialized repertoire of mRNAs and, together with other initiation factors, stimulates binding of mRNA and methionyl-tRNAi to the 40S ribosome. The eIF-3 complex specifically targets and initiates translation of a subset of mRNAs involved in cell proliferation. In addition to its role in the eIF-3 complex, also functions in protein ubiquitination and degradation. During mitosis required for regulating mitotic microtubule growth and kinetochore formation, and consequently is required for satisfying the spindle assembly checkpoint (SAC) during metaphase to prevent delays in mitotic progression. This is likely by promoting the ubiquitination and degradation of Klp67A, a kinesin-like protein that suppresses microtubule polymerization at plus ends. Acts in the COP9 signalosome (CSN) mediated regulation of cullin neddylation by promoting Cul1 and Cul3 neddylation and negatively regulating the CSN complex subunit CSN5. This Drosophila melanogaster (Fruit fly) protein is Eukaryotic translation initiation factor 3 subunit E.